Reading from the N-terminus, the 406-residue chain is Phosphopentomutase (406 aa).

Residues D10, D305, H310, D346, H347, and H358 each contribute to the Mn(2+) site.

The protein belongs to the phosphopentomutase family. Mn(2+) is required as a cofactor.

It is found in the cytoplasm. It carries out the reaction 2-deoxy-alpha-D-ribose 1-phosphate = 2-deoxy-D-ribose 5-phosphate. It catalyses the reaction alpha-D-ribose 1-phosphate = D-ribose 5-phosphate. It participates in carbohydrate degradation; 2-deoxy-D-ribose 1-phosphate degradation; D-glyceraldehyde 3-phosphate and acetaldehyde from 2-deoxy-alpha-D-ribose 1-phosphate: step 1/2. Functionally, isomerase that catalyzes the conversion of deoxy-ribose 1-phosphate (dRib-1-P) and ribose 1-phosphate (Rib-1-P) to deoxy-ribose 5-phosphate (dRib-5-P) and ribose 5-phosphate (Rib-5-P), respectively. This chain is Phosphopentomutase, found in Sinorhizobium fredii (strain NBRC 101917 / NGR234).